Reading from the N-terminus, the 268-residue chain is Protein MGF 300-1L (268 aa).

The Cytoplasmic portion of the chain corresponds to 1 to 175 (MVSLTTCCLK…QTFKTFYAKN (175 aa)). Residues 176 to 193 (YSLSTLYCIFLAIYYKLY) traverse the membrane as a helical segment. Residues 194–268 (TALRKMVKIY…MYAFSQNDYW (75 aa)) lie on the Extracellular side of the membrane. Residue Asn-227 is glycosylated (N-linked (GlcNAc...) asparagine; by host).

This sequence belongs to the asfivirus MGF 300 family.

The protein resides in the host membrane. In terms of biological role, plays a role in virus cell tropism, and may be required for efficient virus replication in macrophages. The protein is Protein MGF 300-1L of African swine fever virus (strain Badajoz 1971 Vero-adapted) (Ba71V).